Here is a 96-residue protein sequence, read N- to C-terminus: Complement inhibitor RaCI4 (96 aa).

A signal peptide spans 1 to 24 (MSAFNIFALVVVVCALMINECCTS). 3 disulfides stabilise this stretch: C37/C61, C42/C63, and C57/C78.

This sequence belongs to the RaCI family. As to expression, expressed in salivary glands.

It localises to the secreted. Functionally, complement inhibitor. Prevents complement-mediated C5 activation by binding to C5. Binds C5 at a different binding site than the other tick complement inhibitors OmCI and CirpT1, and the drug eculizumab. Inhibits complement in human and guinea pig but not in other species tested (rabbit, rat, mouse, and pig). The polypeptide is Complement inhibitor RaCI4 (Hyalomma rufipes (Tick)).